Here is a 191-residue protein sequence, read N- to C-terminus: Small ribosomal subunit protein uS7 (191 aa).

The disordered stretch occupies residues 56–80 (NKSGEQGDGDGEGGGKAGGIKKRSL).

Belongs to the universal ribosomal protein uS7 family. Part of the 30S ribosomal subunit. Contacts proteins S9 and S11.

Its function is as follows. One of the primary rRNA binding proteins, it binds directly to 16S rRNA where it nucleates assembly of the head domain of the 30S subunit. Is located at the subunit interface close to the decoding center, probably blocks exit of the E-site tRNA. In Coxiella burnetii (strain CbuG_Q212) (Coxiella burnetii (strain Q212)), this protein is Small ribosomal subunit protein uS7.